Here is a 39-residue protein sequence, read N- to C-terminus: U-limacoditoxin(13)-As54 (39 aa).

The N-terminal stretch at 1–23 (MSKYIVLLVVSAIALLQFSMIEC) is a signal peptide. Phenylalanine amide is present on Phe37.

This sequence belongs to the FARP (FMRFamide related peptide) family. In terms of tissue distribution, expressed by the venom secretory cell of the spine. The spine is a cuticular structure containing a single large nucleated venom-secreting cell at its base. It is an independent unit capable of producing, storing and injecting venom. On the back of A.stimulea caterpillars, spines are grouped together by 50 to 100 to form scoli, of which there are eight.

The protein resides in the secreted. Its function is as follows. Strongly activates (at 30 uM) the human neuropeptide FF receptor 1 (NPFF1R), a G-protein coupled receptor, with an effect that is equipotent to the endogenous RFRP-1 ligand in activating NPFFR1. Is toxic when injected into Drosophila melanogaster. Also shows a moderate anthelmintic activity against the parasitic nematode H.contortus (drug susceptible Kirby isolate) (IC(50)=20.1 uM). The chain is U-limacoditoxin(13)-As54 from Acharia stimulea (Saddleback caterpillar moth).